Here is a 611-residue protein sequence, read N- to C-terminus: U-box domain-containing protein 12 (611 aa).

The U-box domain occupies 227–301 (IIPDEFRCPI…SQWCEANGIE (75 aa)). ARM repeat units follow at residues 355-394 (VNNRICIAEAGAIPLLVNLLSSSDPRTQEHAVTALLNLSI), 396-435 (ENNKASIVDSHAIPKIVEVLKTGSMETRENAAATLFSLSV), 437-476 (DENKVTIGAAGAIPPLINLLCDGSPRGKKDAATAIFNLCI), and 478-517 (QGNKVRAVKAGIVIHLMNFLVDPTGGMIDEALSLLSILAG).

It catalyses the reaction S-ubiquitinyl-[E2 ubiquitin-conjugating enzyme]-L-cysteine + [acceptor protein]-L-lysine = [E2 ubiquitin-conjugating enzyme]-L-cysteine + N(6)-ubiquitinyl-[acceptor protein]-L-lysine.. It participates in protein modification; protein ubiquitination. In terms of biological role, possesses E3 ubiquitin-protein ligase in vitro. This is U-box domain-containing protein 12 (PUB12) from Oryza sativa subsp. japonica (Rice).